The primary structure comprises 412 residues: 8-amino-7-oxononanoate synthase (412 aa).

106 to 107 (GY) serves as a coordination point for pyridoxal 5'-phosphate. Residue H131 participates in substrate binding. S187, H219, and T247 together coordinate pyridoxal 5'-phosphate. At K250 the chain carries N6-(pyridoxal phosphate)lysine. A substrate-binding site is contributed by T370.

The protein belongs to the class-II pyridoxal-phosphate-dependent aminotransferase family. BioF subfamily. As to quaternary structure, homodimer. The cofactor is pyridoxal 5'-phosphate.

The catalysed reaction is 6-carboxyhexanoyl-[ACP] + L-alanine + H(+) = (8S)-8-amino-7-oxononanoate + holo-[ACP] + CO2. Its pathway is cofactor biosynthesis; biotin biosynthesis. In terms of biological role, 8-amino-7-oxononanoate synthase; part of the cluster involved in the biosynthesis of biotin (also known as vitamin B8 or vitamin H), a water-soluble vitamin that functions as a prosthetic group of many carboxylases, such as acetyl-CoA carboxylase and pyruvate carboxylase. Catalyzes the decarboxylative condensation of pimeloyl-[acyl-carrier protein] and L-alanine to produce 8-amino-7-oxononanoate (AON). In Emericella nidulans (strain FGSC A4 / ATCC 38163 / CBS 112.46 / NRRL 194 / M139) (Aspergillus nidulans), this protein is 8-amino-7-oxononanoate synthase.